We begin with the raw amino-acid sequence, 705 residues long: Polyribonucleotide nucleotidyltransferase (705 aa).

The Mg(2+) site is built by aspartate 486 and aspartate 492. Residues 553-612 (PRIHTMKVSQDKIRDIIGKGGATIRQLTEETGTTIEIEDDGTVKIAATSGEQAEDAINRI) enclose the KH domain. In terms of domain architecture, S1 motif spans 622 to 690 (GTLYTGKVVR…RQGRVRLSIK (69 aa)).

Belongs to the polyribonucleotide nucleotidyltransferase family. Component of the RNA degradosome, which is a multiprotein complex involved in RNA processing and mRNA degradation. Mg(2+) is required as a cofactor.

It is found in the cytoplasm. It catalyses the reaction RNA(n+1) + phosphate = RNA(n) + a ribonucleoside 5'-diphosphate. In terms of biological role, involved in mRNA degradation. Catalyzes the phosphorolysis of single-stranded polyribonucleotides processively in the 3'- to 5'-direction. This is Polyribonucleotide nucleotidyltransferase from Colwellia psychrerythraea (strain 34H / ATCC BAA-681) (Vibrio psychroerythus).